We begin with the raw amino-acid sequence, 213 residues long: NADH dehydrogenase [ubiquinone] iron-sulfur protein 7, mitochondrial (213 aa).

Residues 1–37 (MAVLSAPGLRGFRILGLRSSVGPAVQARSVHQSVATD) constitute a mitochondrion transit peptide. Residues 30–44 (VHQSVATDGPSSTQP) are compositionally biased toward polar residues. Positions 30–53 (VHQSVATDGPSSTQPALPKARAVA) are disordered. [4Fe-4S] cluster is bound by residues Cys-88 and Cys-89. A Hydroxyarginine modification is found at Arg-111. [4Fe-4S] cluster is bound by residues Cys-153 and Cys-183.

The protein belongs to the complex I 20 kDa subunit family. Core subunit of respiratory chain NADH dehydrogenase (Complex I) which is composed of 45 different subunits. This is a component of the iron-sulfur (IP) fragment of the enzyme. Requires [4Fe-4S] cluster as cofactor. Post-translationally, hydroxylated ar Arg-111 by NDUFAF5 early in the pathway of assembly of complex I, before the formation of the juncture between peripheral and membrane arms.

It localises to the mitochondrion inner membrane. The catalysed reaction is a ubiquinone + NADH + 5 H(+)(in) = a ubiquinol + NAD(+) + 4 H(+)(out). Core subunit of the mitochondrial membrane respiratory chain NADH dehydrogenase (Complex I) which catalyzes electron transfer from NADH through the respiratory chain, using ubiquinone as an electron acceptor. Essential for the catalytic activity of complex I. This Pan troglodytes (Chimpanzee) protein is NADH dehydrogenase [ubiquinone] iron-sulfur protein 7, mitochondrial (NDUFS7).